The sequence spans 91 residues: Non-specific lipid-transfer protein 1 (91 aa).

4 disulfide bridges follow: cysteine 4/cysteine 51, cysteine 14/cysteine 28, cysteine 29/cysteine 74, and cysteine 49/cysteine 88.

As to expression, detected in seeds (at protein level).

Plant non-specific lipid-transfer proteins transfer phospholipids as well as galactolipids across membranes. May play a role in wax or cutin deposition in the cell walls of expanding epidermal cells and certain secretory tissues. The chain is Non-specific lipid-transfer protein 1 from Trachyspermum ammi (Ajowan caraway).